A 254-amino-acid chain; its full sequence is MPNAQIPVLKKNRTKKRTSRKIAILLILLFIVLLAVLFFRSSLSRVSEIRFDGNVFSTRDQLLNRSGLAVGDQYFGVSSSDISEKLREIQSIQQVTVDKQFPGIIAIHIKEFATVAYELQSDGSLRAILANGTSVSVGSSGIAVEKPILTKWRSDDPYKAKLCDALSRIPGEWTADISEIIPAPIPSFPDRIKMYTRSQFEVITTVSLLNSKISYLNQVLETEDPGLITMLEADSYVPFKPDTSEEGQEKDTTQ.

The Cytoplasmic portion of the chain corresponds to 1-21 (MPNAQIPVLKKNRTKKRTSRK). The helical transmembrane segment at 22 to 42 (IAILLILLFIVLLAVLFFRSS) threads the bilayer. At 43–254 (LSRVSEIRFD…EEGQEKDTTQ (212 aa)) the chain is on the extracellular side. The region spanning 44 to 112 (SRVSEIRFDG…GIIAIHIKEF (69 aa)) is the POTRA domain.

This sequence belongs to the FtsQ/DivIB family. DivIB subfamily.

It localises to the cell membrane. Cell division protein that may be involved in stabilizing or promoting the assembly of the division complex. This chain is Cell division protein DivIB, found in Paenibacillus polymyxa (strain E681).